A 1851-amino-acid polypeptide reads, in one-letter code: Voltage-dependent calcium channel type A subunit alpha-1 (1851 aa).

Topologically, residues methionine 1–proline 38 are cytoplasmic. An I repeat occupies asparagine 25–phenylalanine 316. A helical transmembrane segment spans residues proline 39 to leucine 57. Residues glutamate 58–lysine 75 are Extracellular-facing. The helical transmembrane segment at threonine 76–leucine 95 threads the bilayer. Over glycine 96–asparagine 107 the chain is Cytoplasmic. A helical membrane pass occupies residues isoleucine 108–isoleucine 128. The Extracellular portion of the chain corresponds to glycine 129–aspartate 133. Residues leucine 134–isoleucine 152 traverse the membrane as a helical segment. Over proline 153–glutamine 171 the chain is Cytoplasmic. A helical membrane pass occupies residues isoleucine 172–tyrosine 191. Topologically, residues serine 192–phenylalanine 288 are extracellular. 2 N-linked (GlcNAc...) asparagine glycosylation sites follow: asparagine 234 and asparagine 235. The helical transmembrane segment at asparagine 289–serine 313 threads the bilayer. Over glycine 314–glutamine 441 the chain is Cytoplasmic. Positions arginine 381–glutamine 417 are disordered. Positions threonine 395 to aspartate 406 are enriched in acidic residues. The stretch at glutamate 427 to leucine 670 is one II repeat. A helical membrane pass occupies residues tryptophan 442 to valine 460. Residues glutamate 461–tyrosine 475 lie on the Extracellular side of the membrane. A helical transmembrane segment spans residues alanine 476 to leucine 495. Over glycine 496–serine 503 the chain is Cytoplasmic. The chain crosses the membrane as a helical span at residues serine 504–tryptophan 522. The Extracellular portion of the chain corresponds to serine 523–glycine 531. The chain crosses the membrane as a helical span at residues leucine 532–tryptophan 550. Over serine 551–serine 569 the chain is Cytoplasmic. The chain crosses the membrane as a helical span at residues leucine 570–phenylalanine 589. Residues glycine 590–isoleucine 642 are Extracellular-facing. A helical membrane pass occupies residues tyrosine 643–valine 667. Residues aspartate 668 to asparagine 767 are Cytoplasmic-facing. Residues glutamate 710–lysine 741 are disordered. An III repeat occupies alanine 762–alanine 1049. The helical transmembrane segment at leucine 768–leucine 786 threads the bilayer. Residues alanine 787 to leucine 802 are Extracellular-facing. The chain crosses the membrane as a helical span at residues asparagine 803–valine 822. At aspartate 823–leucine 834 the chain is on the cytoplasmic side. The chain crosses the membrane as a helical span at residues arginine 835–phenylalanine 853. The Extracellular segment spans residues glycine 854–leucine 866. The N-linked (GlcNAc...) asparagine glycan is linked to asparagine 865. The helical transmembrane segment at serine 867 to lysine 885 threads the bilayer. Over arginine 886 to valine 904 the chain is Cytoplasmic. A helical membrane pass occupies residues valine 905 to glutamine 924. The Extracellular segment spans residues leucine 925–arginine 1013. A helical membrane pass occupies residues isoleucine 1014–leucine 1038. Residues isoleucine 1039–valine 1093 are Cytoplasmic-facing. The IV repeat unit spans residues tyrosine 1086–serine 1347. The helical transmembrane segment at serine 1094–methionine 1122 threads the bilayer. At tyrosine 1123–leucine 1127 the chain is on the extracellular side. A helical transmembrane segment spans residues lysine 1128–isoleucine 1147. Residues glycine 1148–phenylalanine 1155 are Cytoplasmic-facing. A helical membrane pass occupies residues lysine 1156 to alanine 1174. The Extracellular segment spans residues leucine 1175–serine 1184. Residues asparagine 1185–leucine 1203 form a helical membrane-spanning segment. At leucine 1204–lysine 1222 the chain is on the cytoplasmic side. The chain crosses the membrane as a helical span at residues alanine 1223 to glycine 1242. Topologically, residues methionine 1243 to cysteine 1308 are extracellular. The segment at glutamate 1306–serine 1348 is phenylalkylamine binding. Residues glycine 1309–valine 1333 traverse the membrane as a helical segment. Residues alanine 1334 to cysteine 1851 lie on the Cytoplasmic side of the membrane. An EF-hand domain is found at histidine 1353 to proline 1388. Ca(2+)-binding residues include aspartate 1366, asparagine 1368, threonine 1370, lysine 1372, and glutamate 1377. Disordered stretches follow at residues aspartate 1513 to isoleucine 1572, threonine 1588 to arginine 1653, arginine 1685 to arginine 1764, and valine 1823 to cysteine 1851. A compositionally biased stretch (basic residues) spans arginine 1589 to tyrosine 1600. Positions serine 1604 to arginine 1619 are enriched in low complexity. 2 stretches are compositionally biased toward polar residues: residues tyrosine 1637–proline 1649 and lysine 1698–asparagine 1710. Over residues histidine 1734–arginine 1764 the composition is skewed to basic and acidic residues.

The protein belongs to the calcium channel alpha-1 subunit (TC 1.A.1.11) family. Expressed widely in the embryonic nervous system.

It localises to the membrane. Functionally, voltage-sensitive calcium channels (VSCC) mediate the entry of calcium ions into excitable cells and are also involved in a variety of calcium-dependent processes, including muscle contraction, neurotransmitter release, gene expression, cell motility, cell division and cell death. Probably encodes a dihydropyridine-insensitive current. Vital for survival to adulthood. This is Voltage-dependent calcium channel type A subunit alpha-1 (cac) from Drosophila melanogaster (Fruit fly).